A 1583-amino-acid polypeptide reads, in one-letter code: Transcriptional activator GLI3 (1583 aa).

An N-acetylmethionine modification is found at Met-1. 2 stretches are compositionally biased toward polar residues: residues 1–10 (MEAQAHSSTA) and 58–78 (ITMQPQSVQGLNKISEEPSTS). The tract at residues 1–78 (MEAQAHSSTA…NKISEEPSTS (78 aa)) is disordered. At Arg-175 the chain carries Omega-N-methylarginine. The interval 368 to 475 (QSLGSAFGHS…DKDESKQEPE (108 aa)) is disordered. A compositionally biased stretch (low complexity) spans 403 to 421 (VQVSSGPSESSQSKPTSES). Lys-438 is covalently cross-linked (Glycyl lysine isopeptide (Lys-Gly) (interchain with G-Cter in SUMO2)). The segment covering 448-457 (SRGQQEQPEG) has biased composition (polar residues). Residues 461–474 (VKEEADKDESKQEP) show a composition bias toward basic and acidic residues. Lys-462 participates in a covalent cross-link: Glycyl lysine isopeptide (Lys-Gly) (interchain with G-Cter in SUMO2). C2H2-type zinc fingers lie at residues 480 to 505 (TNCHWEGCTREFDTQDQLVHHINNDH), 513 to 540 (FVCRWLDCSREQKPFKAQYMLVVHMRRH), 546 to 570 (HKCTFEGCTKAYSRLENLKTHLRSH), 576 to 601 (YVCEHEGCNKAFSNASDRAKHQNRTH), and 607 to 632 (YVCKIPGCTKRYTDPSSLRKHVKTVH). The segment at 620-728 (DPSSLRKHVK…PISNYSNSGL (109 aa)) is disordered. Positions 632–648 (HGPEAHVTKKQRGDMHP) are enriched in basic and acidic residues. Ser-664 is modified (phosphoserine). Residues 684 to 699 (SKREECLQVKTVKAEK) are compositionally biased toward basic and acidic residues. Positions 703 to 726 (SQPSPGGQSSCSSQQSPISNYSNS) are enriched in low complexity. A mediates interaction with DZIP1 region spans residues 745–845 (DETPIMDSTI…VDFTVLNTLN (101 aa)). Residue Lys-773 forms a Glycyl lysine isopeptide (Lys-Gly) (interchain with G-Cter in ubiquitin) linkage. Lys-779 participates in a covalent cross-link: Glycyl lysine isopeptide (Lys-Gly) (interchain with G-Cter in SUMO2); alternate. Lys-779 participates in a covalent cross-link: Glycyl lysine isopeptide (Lys-Gly) (interchain with G-Cter in ubiquitin); alternate. Glycyl lysine isopeptide (Lys-Gly) (interchain with G-Cter in ubiquitin) cross-links involve residues Lys-784 and Lys-800. Positions 809-828 (GNGTQSNNNYSSGGPGTLLP) are disordered. A compositionally biased stretch (polar residues) spans 810-820 (NGTQSNNNYSS). A phosphoserine; by PKA mark is found at Ser-849, Ser-865, Ser-877, Ser-907, Ser-980, and Ser-1006. Low complexity predominate over residues 863 to 880 (RSSGISPCFSSRRSSEAS). Residues 863-918 (RSSGISPCFSSRRSSEASQAEGRPQNVSVADSYDPISTDASRRSSEASQGDGLPSL) form a disordered region. The tract at residues 1164 to 1189 (EVSSGTSDLSSSKLKCGQQRPSAQQP) is disordered. The span at 1166–1175 (SSGTSDLSSS) shows a compositional bias: low complexity.

This sequence belongs to the GLI C2H2-type zinc-finger protein family. As to quaternary structure, the phosphorylated form interacts with BTRC. The full-length GLI3 form (GLI3FL) interacts with SUFU and this interaction regulates the formation of either repressor or activator forms of GLI3. Its association with SUFU is regulated by Hh signaling and dissociation of the SUFU-GLI3 interaction requires the presence of the ciliary motor KIF3A. Interacts with KIF7. The activator form of GLI3 (GLI3A) but not the repressor form (GLI3R) can interact with TRPS1. Interacts with ZIC1. Interacts with ZIC3 (via C2H2-type domains 3, 4 and 5); the interaction enhances its transcriptional activity. Interacts with WRD11; the interaction associates EMX1 with GLI3. Interacts with DZIP1; retains GLI3 within the cytoplasm. Post-translationally, phosphorylated by DYRK2 (in vitro). Phosphorylated on multiple sites by protein kinase A (PKA) and phosphorylation by PKA primes further phosphorylation by CK1 and GSK3. Phosphorylation is essential for its proteolytic processing. In terms of processing, transcriptional repressor GLI3R, a C-terminally truncated form, is generated from the full-length GLI3 protein (GLI3FL/GLI3-190) through proteolytic processing. This process requires PKA-primed phosphorylation of GLI3, ubiquitination of GLI3 and the presence of BTRC. GLI3FL is complexed with SUFU in the cytoplasm and is maintained in a neutral state. Without the Hh signal, the SUFU-GLI3 complex is recruited to cilia, leading to the efficient processing of GLI3FL into GLI3R. GLI3R formation leads to its dissociation from SUFU, allowing it to translocate into the nucleus, and repress Hh target genes. When Hh signaling is initiated, SUFU dissociates from GLI3FL and this has two consequences. First, GLI3R production is halted. Second, free GLI3FL translocates to the nucleus, where it is phosphorylated, destabilized, and converted to a transcriptional activator (GLI3A). Phosphorylated in vitro by ULK3.

The protein localises to the nucleus. The protein resides in the cytoplasm. It localises to the cell projection. Its subcellular location is the cilium. Functionally, has a dual function as a transcriptional activator and a repressor of the sonic hedgehog (Shh) pathway, and plays a role in limb development. The full-length GLI3 form (GLI3FL) after phosphorylation and nuclear translocation, acts as an activator (GLI3A) while GLI3R, its C-terminally truncated form, acts as a repressor. A proper balance between the GLI3 activator and the repressor GLI3R, rather than the repressor gradient itself or the activator/repressor ratio gradient, specifies limb digit number and identity. In concert with TRPS1, plays a role in regulating the size of the zone of distal chondrocytes, in restricting the zone of PTHLH expression in distal cells and in activating chondrocyte proliferation. Binds to the minimal GLI-consensus sequence 5'-GGGTGGTC-3'. In Mus musculus (Mouse), this protein is Transcriptional activator GLI3 (Gli3).